The following is a 468-amino-acid chain: Phosphomethylpyrimidine synthase (468 aa).

Substrate-binding positions include N80, M109, Y138, H173, 193–195 (SRG), 234–237 (DGLR), and E273. H277 contributes to the Zn(2+) binding site. Residue Y300 coordinates substrate. H341 provides a ligand contact to Zn(2+). Residues C421, C424, and C429 each contribute to the [4Fe-4S] cluster site.

The protein belongs to the ThiC family. In terms of assembly, homodimer. [4Fe-4S] cluster is required as a cofactor.

It carries out the reaction 5-amino-1-(5-phospho-beta-D-ribosyl)imidazole + S-adenosyl-L-methionine = 4-amino-2-methyl-5-(phosphooxymethyl)pyrimidine + CO + 5'-deoxyadenosine + formate + L-methionine + 3 H(+). Its pathway is cofactor biosynthesis; thiamine diphosphate biosynthesis. Catalyzes the synthesis of the hydroxymethylpyrimidine phosphate (HMP-P) moiety of thiamine from aminoimidazole ribotide (AIR) in a radical S-adenosyl-L-methionine (SAM)-dependent reaction. The protein is Phosphomethylpyrimidine synthase of Anaeromyxobacter sp. (strain Fw109-5).